Reading from the N-terminus, the 851-residue chain is Alanine--tRNA ligase (851 aa).

Positions 554, 558, 656, and 660 each coordinate Zn(2+).

Belongs to the class-II aminoacyl-tRNA synthetase family. It depends on Zn(2+) as a cofactor.

It is found in the cytoplasm. The enzyme catalyses tRNA(Ala) + L-alanine + ATP = L-alanyl-tRNA(Ala) + AMP + diphosphate. Its function is as follows. Catalyzes the attachment of alanine to tRNA(Ala) in a two-step reaction: alanine is first activated by ATP to form Ala-AMP and then transferred to the acceptor end of tRNA(Ala). Also edits incorrectly charged Ser-tRNA(Ala) and Gly-tRNA(Ala) via its editing domain. This chain is Alanine--tRNA ligase, found in Aliarcobacter butzleri (strain RM4018) (Arcobacter butzleri).